The chain runs to 319 residues: MNREDFIKEPVEDIRVSERDTVADLIEKYCKVHGFTAADVCRAVEVLSEGLRNSDLRFLSFTANLVATGLRGLLAQMVRSGYFDVVVTTCGTLDHDVARSLGHKYYKGYFEADDVVLAKSDIHRLGNVFIPVENYGPPVERLVKDVLRELGKTMVAPYELIWEVGKRLSDENSILRAAWERKVPVIVPGITDGAFGTAIFTYSEELKLQGKDFCLDVLADEKLLSDMVFSSKRSAALVVGGGISKHHVIWWNQFKGGLDYAVYLTTAQEYDGSLSGARPREAITWGKLKPEGRSATVYGDATVLLPIIWAGVLAKVQKA.

Lys287 acts as the Nucleophile in catalysis.

Belongs to the deoxyhypusine synthase family. The cofactor is NAD(+).

The enzyme catalyses [eIF5A protein]-L-lysine + spermidine = [eIF5A protein]-deoxyhypusine + propane-1,3-diamine. The protein operates within protein modification; eIF5A hypusination. Functionally, catalyzes the NAD-dependent oxidative cleavage of spermidine and the subsequent transfer of the butylamine moiety of spermidine to the epsilon-amino group of a specific lysine residue of the eIF-5A precursor protein to form the intermediate deoxyhypusine residue. The protein is Probable deoxyhypusine synthase of Ignicoccus hospitalis (strain KIN4/I / DSM 18386 / JCM 14125).